The chain runs to 138 residues: Large ribosomal subunit protein uL16 (138 aa).

The protein belongs to the universal ribosomal protein uL16 family. As to quaternary structure, part of the 50S ribosomal subunit.

Its function is as follows. Binds 23S rRNA and is also seen to make contacts with the A and possibly P site tRNAs. The polypeptide is Large ribosomal subunit protein uL16 (Nitrosomonas europaea (strain ATCC 19718 / CIP 103999 / KCTC 2705 / NBRC 14298)).